We begin with the raw amino-acid sequence, 133 residues long: Hemiptericin (133 aa).

Functionally, antibacterial peptide. Affects Gram-negative bacteria. This chain is Hemiptericin, found in Pyrrhocoris apterus (Sap sucking bug).